The following is a 118-amino-acid chain: Large ribosomal subunit protein bL20 (118 aa).

It belongs to the bacterial ribosomal protein bL20 family.

Binds directly to 23S ribosomal RNA and is necessary for the in vitro assembly process of the 50S ribosomal subunit. It is not involved in the protein synthesizing functions of that subunit. The protein is Large ribosomal subunit protein bL20 of Lactobacillus johnsonii (strain CNCM I-12250 / La1 / NCC 533).